The following is a 438-amino-acid chain: UDP-glycosyltransferase 84B2 (438 aa).

UDP-alpha-D-glucose contacts are provided by residues Ser260, 314-316, 331-339, and 353-356; these read GQQ, HCGWNSTIE, and WIDQ.

The protein belongs to the UDP-glycosyltransferase family.

This chain is UDP-glycosyltransferase 84B2 (UGT84B2), found in Arabidopsis thaliana (Mouse-ear cress).